Here is a 185-residue protein sequence, read N- to C-terminus: Lectin B4 (185 aa).

Asn48 carries N-linked (GlcNAc...) asparagine glycosylation. 2 residues coordinate Mn(2+): Glu111 and Asp113. Ca(2+) is bound by residues Asp113, Tyr115, Asn117, and Asp120. Asp120 contacts Mn(2+). The N-linked (GlcNAc...) asparagine glycan is linked to Asn122. His125 is a Mn(2+) binding site.

The protein belongs to the leguminous lectin family. In terms of assembly, homo- or heterotetramer. V.villosa isolectins are composed of either two subunits a and two subunits B (A2B2), four subunits A (A4), or four subunits B (B4). The predominant form, isolectin B4, has no A1 erythrocyte agglutinating activity.

Its function is as follows. N-acetyl-D-galactosamine specific lectin. Binds the Tn determinant (GalNAc-alpha-O-Ser/Thr) of the tumor-associated glycopeptide. Could be required for agglutinating cells such as Tn-exposed erythrocytes. In Vicia villosa (Hairy vetch), this protein is Lectin B4.